The chain runs to 228 residues: FAS1 domain-containing protein NCU02579 (228 aa).

The N-terminal stretch at 1–18 (MRFTPYLVLAPTAAVAFA) is a signal peptide. The tract at residues 50–74 (PAVGLGPAMPPSGAPQADGPANAGG) is disordered. An FAS1 domain is found at 77 to 225 (SVMLSDVMGR…GEVWILKGVR (149 aa)).

It localises to the vacuole. The polypeptide is FAS1 domain-containing protein NCU02579 (Neurospora crassa (strain ATCC 24698 / 74-OR23-1A / CBS 708.71 / DSM 1257 / FGSC 987)).